Reading from the N-terminus, the 389-residue chain is tRNA-specific 2-thiouridylase MnmA (389 aa).

Residues 35–42 and methionine 61 each bind ATP; that span reads GMSGGVDS. Residues 121–123 form an interaction with target base in tRNA region; that stretch reads NPD. Catalysis depends on cysteine 126, which acts as the Nucleophile. Residues cysteine 126 and cysteine 223 are joined by a disulfide bond. Glycine 151 is an ATP binding site. Residues 173–175 are interaction with tRNA; that stretch reads KDQ. Catalysis depends on cysteine 223, which acts as the Cysteine persulfide intermediate. Positions 335-336 are interaction with tRNA; it reads RY.

This sequence belongs to the MnmA/TRMU family.

The protein resides in the cytoplasm. The enzyme catalyses S-sulfanyl-L-cysteinyl-[protein] + uridine(34) in tRNA + AH2 + ATP = 2-thiouridine(34) in tRNA + L-cysteinyl-[protein] + A + AMP + diphosphate + H(+). Its function is as follows. Catalyzes the 2-thiolation of uridine at the wobble position (U34) of tRNA, leading to the formation of s(2)U34. This is tRNA-specific 2-thiouridylase MnmA from Actinobacillus pleuropneumoniae serotype 5b (strain L20).